The sequence spans 423 residues: MKLYSLGVLVATVLFCGEHAFAFQRGQVLSALPRTSRQVQILQNVTTTYKIVLWQPVAAEYIVKGYEVHFFVNASDVSNVKAHLNASRIPFRVLVENVEDLIRQQTSNDTISPRASSSYYEQYHSLNEIYSWIEVMTERYPDMVEKIHIGSSYEKYPLYVLKVSKKEQRAKNAMWIDCGIHAREWISPAFCLWFVGSVTYYYGKEKMHTNLLKHMDFYIMPVVNVDGYDYTWKKDRMWRKNRSLHEKNACVGTDLNRNFASKHWCGEGASSSSCSEIYCGTYPESEPEVKAVADFLRRNIKHIKAYISMHSYSQKIVFPYSYSRSRSKDHEELSLVAREAVFAMENIHRNIRYTHGSGSESLYLAPGGSDDWIYDLGIKYSFTFELRDKGKYGFLLPESYIRPTCSEALVAVAKIASHVVKNV.

Residues 1–22 form the signal peptide; sequence MKLYSLGVLVATVLFCGEHAFA. A propeptide spans 23 to 114 (activation peptide); that stretch reads FQRGQVLSAL…QTSNDTISPR (92 aa). N-linked (GlcNAc...) asparagine glycans are attached at residues Asn-44, Asn-73, Asn-85, and Asn-108. In terms of domain architecture, Peptidase M14 spans 122–419; sequence QYHSLNEIYS…VAVAKIASHV (298 aa). Cysteines 178 and 191 form a disulfide. Zn(2+) contacts are provided by His-181 and Glu-184. Residues 181–184 and Arg-239 each bind substrate; that span reads HARE. The N-linked (GlcNAc...) asparagine glycan is linked to Asn-241. 2 disulfides stabilise this stretch: Cys-250/Cys-274 and Cys-265/Cys-279. 256-257 serves as a coordination point for substrate; it reads NR. Zn(2+) is bound at residue His-310. Residues 311–312 and Tyr-363 each bind substrate; that span reads SY. Glu-385 (proton donor/acceptor) is an active-site residue.

This sequence belongs to the peptidase M14 family. Requires Zn(2+) as cofactor.

It localises to the secreted. It catalyses the reaction Release of C-terminal Arg and Lys from a polypeptide.. Its activity is regulated as follows. TAFI/CPB2 is unique among carboxypeptidases in that it spontaneously inactivates with a short half-life, a property that is crucial for its role in controlling blood clot lysis. The zymogen is stabilized by interactions with the activation peptide. Release of the activation peptide increases a dynamic flap mobility and in time this leads to conformational changes that disrupt the catalytic site and expose a cryptic thrombin-cleavage site present at Arg-324. Its function is as follows. Cleaves C-terminal arginine or lysine residues from biologically active peptides such as kinins or anaphylatoxins in the circulation thereby regulating their activities. Down-regulates fibrinolysis by removing C-terminal lysine residues from fibrin that has already been partially degraded by plasmin. This Bos taurus (Bovine) protein is Carboxypeptidase B2 (CPB2).